Here is a 55-residue protein sequence, read N- to C-terminus: ATP synthase protein 8 (55 aa).

Residues Ile-7–Leu-28 form a helical membrane-spanning segment.

The protein belongs to the ATPase protein 8 family. F-type ATPases have 2 components, CF(1) - the catalytic core - and CF(0) - the membrane proton channel.

It is found in the mitochondrion membrane. Its function is as follows. Mitochondrial membrane ATP synthase (F(1)F(0) ATP synthase or Complex V) produces ATP from ADP in the presence of a proton gradient across the membrane which is generated by electron transport complexes of the respiratory chain. F-type ATPases consist of two structural domains, F(1) - containing the extramembraneous catalytic core and F(0) - containing the membrane proton channel, linked together by a central stalk and a peripheral stalk. During catalysis, ATP synthesis in the catalytic domain of F(1) is coupled via a rotary mechanism of the central stalk subunits to proton translocation. Part of the complex F(0) domain. Minor subunit located with subunit a in the membrane. The polypeptide is ATP synthase protein 8 (MT-ATP8) (Pisaster ochraceus (Ochre sea star)).